A 180-amino-acid chain; its full sequence is Endoribonuclease YbeY (180 aa).

3 residues coordinate Zn(2+): His-149, His-153, and His-159.

This sequence belongs to the endoribonuclease YbeY family. The cofactor is Zn(2+).

The protein localises to the cytoplasm. Functionally, single strand-specific metallo-endoribonuclease involved in late-stage 70S ribosome quality control and in maturation of the 3' terminus of the 16S rRNA. The sequence is that of Endoribonuclease YbeY from Prochlorococcus marinus (strain MIT 9515).